Here is a 314-residue protein sequence, read N- to C-terminus: Mitochondrial 2-oxoglutarate/malate carrier protein (314 aa).

Residue alanine 2 is modified to N-acetylalanine. Position 6 is a phosphoserine (serine 6). 3 Solcar repeats span residues 23-108 (VKFL…LFER), 117-208 (PGFL…SKQF), and 217-306 (DNIL…MNKA). The chain crosses the membrane as a helical span at residues 24–42 (KFLFGGLAGMGATVFVQPL). Position 57 is an N6-succinyllysine (lysine 57). Lysine 73 bears the N6-acetyllysine mark. Residues 83-101 (GLSAGLLRQATYTTTRLGI) form a helical membrane-spanning segment. Tyrosine 102 is modified (phosphotyrosine). The next 3 membrane-spanning stretches (helical) occupy residues 119–140 (FLLK…GTPA), 183–202 (GCIP…LASY), and 222–240 (HFCA…SMPV). Residue lysine 256 is modified to N6-acetyllysine. A helical transmembrane segment spans residues 281-300 (GFTPYYARLGPHTVLTFIFL).

It belongs to the mitochondrial carrier (TC 2.A.29) family. As to quaternary structure, interacts with SMIM26. As to expression, most highly expressed in the heart.

It is found in the mitochondrion inner membrane. The enzyme catalyses (S)-malate(in) + 2-oxoglutarate(out) = (S)-malate(out) + 2-oxoglutarate(in). It catalyses the reaction malonate(in) + 2-oxoglutarate(out) = malonate(out) + 2-oxoglutarate(in). The catalysed reaction is succinate(in) + 2-oxoglutarate(out) = succinate(out) + 2-oxoglutarate(in). It carries out the reaction maleate(in) + 2-oxoglutarate(out) = maleate(out) + 2-oxoglutarate(in). The enzyme catalyses oxaloacetate(in) + 2-oxoglutarate(out) = oxaloacetate(out) + 2-oxoglutarate(in). Functionally, catalyzes the transport of 2-oxoglutarate (alpha-oxoglutarate) across the inner mitochondrial membrane in an electroneutral exchange for malate. Can also exchange 2-oxoglutarate for other dicarboxylic acids such as malonate, succinate, maleate and oxaloacetate, although with lower affinity. Contributes to several metabolic processes, including the malate-aspartate shuttle, the oxoglutarate/isocitrate shuttle, in gluconeogenesis from lactate, and in nitrogen metabolism. Maintains mitochondrial fusion and fission events, and the organization and morphology of cristae. Involved in the regulation of apoptosis. Helps protect from cytotoxic-induced apoptosis by modulating glutathione levels in mitochondria. In Homo sapiens (Human), this protein is Mitochondrial 2-oxoglutarate/malate carrier protein (SLC25A11).